The following is a 1141-amino-acid chain: DNA-directed RNA polymerase subunit beta (1141 aa).

The protein belongs to the RNA polymerase beta chain family. As to quaternary structure, the RNAP catalytic core consists of 2 alpha, 1 beta, 1 beta' and 1 omega subunit. When a sigma factor is associated with the core the holoenzyme is formed, which can initiate transcription.

The enzyme catalyses RNA(n) + a ribonucleoside 5'-triphosphate = RNA(n+1) + diphosphate. In terms of biological role, DNA-dependent RNA polymerase catalyzes the transcription of DNA into RNA using the four ribonucleoside triphosphates as substrates. This Parafrankia sp. (strain EAN1pec) protein is DNA-directed RNA polymerase subunit beta.